Here is a 280-residue protein sequence, read N- to C-terminus: Protease HtpX (280 aa).

Transmembrane regions (helical) follow at residues 7-26 (TFIL…GLLG) and 30-49 (GMLV…YWYS). His-129 is a binding site for Zn(2+). Glu-130 is an active-site residue. His-133 contributes to the Zn(2+) binding site. A run of 2 helical transmembrane segments spans residues 146-166 (ATIA…SMFG) and 178-198 (VVGM…QMAI). Residue Glu-203 coordinates Zn(2+).

Belongs to the peptidase M48B family. Requires Zn(2+) as cofactor.

It is found in the cell inner membrane. In Legionella pneumophila (strain Corby), this protein is Protease HtpX.